Here is a 399-residue protein sequence, read N- to C-terminus: Elongation factor Tu (399 aa).

Positions 10–209 (KPHVNVGTIG…EVDKYIPTPQ (200 aa)) constitute a tr-type G domain. The interval 19-26 (GHVDHGKT) is G1. A GTP-binding site is contributed by 19 to 26 (GHVDHGKT). Thr26 serves as a coordination point for Mg(2+). The tract at residues 60–64 (GITIA) is G2. A G3 region spans residues 81–84 (DCPG). Residues 81-85 (DCPGH) and 136-139 (NKQD) contribute to the GTP site. The G4 stretch occupies residues 136-139 (NKQD). Positions 174 to 176 (SAL) are G5.

This sequence belongs to the TRAFAC class translation factor GTPase superfamily. Classic translation factor GTPase family. EF-Tu/EF-1A subfamily. In terms of assembly, monomer.

Its subcellular location is the cytoplasm. The enzyme catalyses GTP + H2O = GDP + phosphate + H(+). Its function is as follows. GTP hydrolase that promotes the GTP-dependent binding of aminoacyl-tRNA to the A-site of ribosomes during protein biosynthesis. The protein is Elongation factor Tu of Helicobacter hepaticus (strain ATCC 51449 / 3B1).